The following is a 175-amino-acid chain: Large ribosomal subunit protein uL10 (175 aa).

It belongs to the universal ribosomal protein uL10 family. As to quaternary structure, part of the ribosomal stalk of the 50S ribosomal subunit. The N-terminus interacts with L11 and the large rRNA to form the base of the stalk. The C-terminus forms an elongated spine to which L12 dimers bind in a sequential fashion forming a multimeric L10(L12)X complex.

In terms of biological role, forms part of the ribosomal stalk, playing a central role in the interaction of the ribosome with GTP-bound translation factors. This is Large ribosomal subunit protein uL10 from Psychrobacter sp. (strain PRwf-1).